Reading from the N-terminus, the 294-residue chain is N-acetylmuramic acid 6-phosphate etherase (294 aa).

In terms of domain architecture, SIS spans 54-217; sequence VIQSFEEEGR…STASMIGVGK (164 aa). The Proton donor role is filled by Glu82. The active site involves Glu113.

The protein belongs to the GCKR-like family. MurNAc-6-P etherase subfamily. As to quaternary structure, homodimer.

It carries out the reaction N-acetyl-D-muramate 6-phosphate + H2O = N-acetyl-D-glucosamine 6-phosphate + (R)-lactate. The protein operates within amino-sugar metabolism; N-acetylmuramate degradation. In terms of biological role, specifically catalyzes the cleavage of the D-lactyl ether substituent of MurNAc 6-phosphate, producing GlcNAc 6-phosphate and D-lactate. In Bacillus cereus (strain 03BB102), this protein is N-acetylmuramic acid 6-phosphate etherase.